The following is a 2958-amino-acid chain: Protein CSF1 (2958 aa).

The Cytoplasmic segment spans residues Met-1 to Asp-17. A helical; Signal-anchor for type II membrane protein transmembrane segment spans residues Phe-18–Phe-38. At Tyr-39–His-2958 the chain is on the extracellular side. Residues Asn-82, Asn-117, Asn-144, Asn-271, Asn-478, Asn-530, Asn-816, Asn-821, Asn-839, and Asn-892 are each glycosylated (N-linked (GlcNAc...) asparagine). Residues Gly-813–Leu-834 form a disordered region. A compositionally biased stretch (basic and acidic residues) spans Asn-821–Leu-834. The disordered stretch occupies residues Met-1175–Phe-1196. Residues Ser-1183 to Asp-1192 show a composition bias toward acidic residues. N-linked (GlcNAc...) asparagine glycans are attached at residues Asn-1309, Asn-1368, Asn-1453, Asn-1785, Asn-1921, Asn-2130, Asn-2146, Asn-2280, Asn-2337, Asn-2520, Asn-2578, Asn-2719, and Asn-2869.

The protein belongs to the CSF1 family. Interacts with MCD4; CSF1 channels phosphatidylethanolamine to MCD4 in the endoplasmic reticulum at contact sites to support GPI anchor biosynthesis.

It localises to the cell membrane. It is found in the endoplasmic reticulum membrane. The protein localises to the mitochondrion membrane. Its function is as follows. Tube-forming lipid transport protein which provides phosphatidylethanolamine for glycosylphosphatidylinositol (GPI) anchor synthesis in the endoplasmic reticulum. Required for the glucose and other nutrients uptake at low temperature. The chain is Protein CSF1 from Saccharomyces cerevisiae (strain ATCC 204508 / S288c) (Baker's yeast).